The chain runs to 319 residues: Lipoyl synthase (319 aa).

The segment at Leu-5–Lys-31 is disordered. Residues Cys-61, Cys-66, Cys-72, Cys-87, Cys-91, Cys-94, and Ser-300 each contribute to the [4Fe-4S] cluster site. Residues Trp-73–Leu-289 enclose the Radical SAM core domain.

Belongs to the radical SAM superfamily. Lipoyl synthase family. The cofactor is [4Fe-4S] cluster.

The protein localises to the cytoplasm. It carries out the reaction [[Fe-S] cluster scaffold protein carrying a second [4Fe-4S](2+) cluster] + N(6)-octanoyl-L-lysyl-[protein] + 2 oxidized [2Fe-2S]-[ferredoxin] + 2 S-adenosyl-L-methionine + 4 H(+) = [[Fe-S] cluster scaffold protein] + N(6)-[(R)-dihydrolipoyl]-L-lysyl-[protein] + 4 Fe(3+) + 2 hydrogen sulfide + 2 5'-deoxyadenosine + 2 L-methionine + 2 reduced [2Fe-2S]-[ferredoxin]. Its pathway is protein modification; protein lipoylation via endogenous pathway; protein N(6)-(lipoyl)lysine from octanoyl-[acyl-carrier-protein]: step 2/2. Functionally, catalyzes the radical-mediated insertion of two sulfur atoms into the C-6 and C-8 positions of the octanoyl moiety bound to the lipoyl domains of lipoate-dependent enzymes, thereby converting the octanoylated domains into lipoylated derivatives. This chain is Lipoyl synthase, found in Nitrobacter winogradskyi (strain ATCC 25391 / DSM 10237 / CIP 104748 / NCIMB 11846 / Nb-255).